The chain runs to 267 residues: Dihydropteroate synthase (267 aa).

The Pterin-binding domain occupies 1–251 (MTKTKIMGIL…NVELNAKLAK (251 aa)). Asn11 contacts Mg(2+). Residues Thr51, Asp84, Asn103, Asp167, Lys203, and 239–241 (RVH) contribute to the (7,8-dihydropterin-6-yl)methyl diphosphate site.

The protein belongs to the DHPS family. In terms of assembly, homodimer. Mg(2+) is required as a cofactor.

It catalyses the reaction (7,8-dihydropterin-6-yl)methyl diphosphate + 4-aminobenzoate = 7,8-dihydropteroate + diphosphate. It functions in the pathway cofactor biosynthesis; tetrahydrofolate biosynthesis; 7,8-dihydrofolate from 2-amino-4-hydroxy-6-hydroxymethyl-7,8-dihydropteridine diphosphate and 4-aminobenzoate: step 1/2. Functionally, catalyzes the condensation of para-aminobenzoate (pABA) with 6-hydroxymethyl-7,8-dihydropterin diphosphate (DHPt-PP) to form 7,8-dihydropteroate (H2Pte), the immediate precursor of folate derivatives. In Staphylococcus aureus (strain Mu50 / ATCC 700699), this protein is Dihydropteroate synthase (folP).